A 401-amino-acid chain; its full sequence is tRNA N6-adenosine threonylcarbamoyltransferase (401 aa).

Positions 111 and 115 each coordinate Fe cation. Substrate is bound by residues 191 to 195, D223, G236, and N336; that span reads LASGG. Fe cation is bound at residue D364.

Belongs to the KAE1 / TsaD family. Requires Fe(2+) as cofactor.

Its subcellular location is the cytoplasm. The enzyme catalyses L-threonylcarbamoyladenylate + adenosine(37) in tRNA = N(6)-L-threonylcarbamoyladenosine(37) in tRNA + AMP + H(+). Its function is as follows. Required for the formation of a threonylcarbamoyl group on adenosine at position 37 (t(6)A37) in tRNAs that read codons beginning with adenine. Is involved in the transfer of the threonylcarbamoyl moiety of threonylcarbamoyl-AMP (TC-AMP) to the N6 group of A37, together with TsaE and TsaB. TsaD likely plays a direct catalytic role in this reaction. This Tropheryma whipplei (strain TW08/27) (Whipple's bacillus) protein is tRNA N6-adenosine threonylcarbamoyltransferase.